The primary structure comprises 152 residues: Superoxide dismutase [Cu-Zn] (152 aa).

3 residues coordinate Cu cation: histidine 45, histidine 47, and histidine 62. Cysteine 56 and cysteine 145 form a disulfide bridge. Histidine 62, histidine 70, histidine 79, and aspartate 82 together coordinate Zn(2+). Cu cation is bound at residue histidine 119.

It belongs to the Cu-Zn superoxide dismutase family. As to quaternary structure, homodimer. It depends on Cu cation as a cofactor. The cofactor is Zn(2+).

Its subcellular location is the cytoplasm. It catalyses the reaction 2 superoxide + 2 H(+) = H2O2 + O2. Its function is as follows. Destroys radicals which are normally produced within the cells and which are toxic to biological systems. This chain is Superoxide dismutase [Cu-Zn] (SODCC), found in Pisum sativum (Garden pea).